The following is a 345-amino-acid chain: ATP-dependent (S)-NAD(P)H-hydrate dehydratase (345 aa).

One can recognise a YjeF C-terminal domain in the interval 9–332 (ILSLARSMIP…DMVGEVYEEV (324 aa)). Residues glycine 113 and 170 to 176 (NVMEFKR) each bind (6S)-NADPHX. ATP is bound by residues 208–212 (KGPSD) and 241–250 (GGLKRVGGQG). Position 251 (aspartate 251) interacts with (6S)-NADPHX.

Belongs to the NnrD/CARKD family. Mg(2+) serves as cofactor.

The protein resides in the cytoplasm. It catalyses the reaction (6S)-NADHX + ATP = ADP + phosphate + NADH + H(+). It carries out the reaction (6S)-NADPHX + ATP = ADP + phosphate + NADPH + H(+). Its function is as follows. Catalyzes the dehydration of the S-form of NAD(P)HX at the expense of ATP, which is converted to ADP. Together with NAD(P)HX epimerase, which catalyzes the epimerization of the S- and R-forms, the enzyme allows the repair of both epimers of NAD(P)HX, a damaged form of NAD(P)H that is a result of enzymatic or heat-dependent hydration. In Cryptococcus neoformans var. neoformans serotype D (strain JEC21 / ATCC MYA-565) (Filobasidiella neoformans), this protein is ATP-dependent (S)-NAD(P)H-hydrate dehydratase.